The sequence spans 490 residues: Cytochrome P450 2C19 (490 aa).

Cys-435 contributes to the heme binding site.

The protein belongs to the cytochrome P450 family. Heme serves as cofactor.

It is found in the endoplasmic reticulum membrane. It localises to the microsome membrane. The catalysed reaction is an organic molecule + reduced [NADPH--hemoprotein reductase] + O2 = an alcohol + oxidized [NADPH--hemoprotein reductase] + H2O + H(+). It catalyses the reaction (5Z,8Z,11Z)-eicosatrienoate + reduced [NADPH--hemoprotein reductase] + O2 = 19-hydroxy-(5Z,8Z,11Z)-eicosatrienoate + oxidized [NADPH--hemoprotein reductase] + H2O + H(+). It carries out the reaction (5Z,8Z,11Z,14Z)-eicosatetraenoate + reduced [NADPH--hemoprotein reductase] + O2 = 19-hydroxy-(5Z,8Z,11Z,14Z)-eicosatetraenoate + oxidized [NADPH--hemoprotein reductase] + H2O + H(+). The enzyme catalyses (5Z,8Z,11Z,14Z,17Z)-eicosapentaenoate + reduced [NADPH--hemoprotein reductase] + O2 = 19-hydroxy-(5Z,8Z,11Z,14Z,17Z)-eicosapentaenoate + oxidized [NADPH--hemoprotein reductase] + H2O + H(+). The catalysed reaction is (4Z,7Z,10Z,13Z,16Z,19Z)-docosahexaenoate + reduced [NADPH--hemoprotein reductase] + O2 = 21-hydroxy-(4Z,7Z,10Z,13Z,16Z,19Z)-docosahexaenoate + oxidized [NADPH--hemoprotein reductase] + H2O + H(+). It catalyses the reaction (5Z,8Z,11Z,14Z)-eicosatetraenoate + reduced [NADPH--hemoprotein reductase] + O2 = (8R,9S)-epoxy-(5Z,11Z,14Z)-eicosatrienoate + oxidized [NADPH--hemoprotein reductase] + H2O + H(+). It carries out the reaction (5Z,8Z,11Z,14Z)-eicosatetraenoate + reduced [NADPH--hemoprotein reductase] + O2 = (11R,12S)-epoxy-(5Z,8Z,14Z)-eicosatrienoate + oxidized [NADPH--hemoprotein reductase] + H2O + H(+). The enzyme catalyses (5Z,8Z,11Z,14Z)-eicosatetraenoate + reduced [NADPH--hemoprotein reductase] + O2 = (11S,12R)-epoxy-(5Z,8Z,14Z)-eicosatrienoate + oxidized [NADPH--hemoprotein reductase] + H2O + H(+). The catalysed reaction is (5Z,8Z,11Z,14Z)-eicosatetraenoate + reduced [NADPH--hemoprotein reductase] + O2 = (14R,15S)-epoxy-(5Z,8Z,11Z)-eicosatrienoate + oxidized [NADPH--hemoprotein reductase] + H2O + H(+). It catalyses the reaction (5Z,8Z,11Z,14Z,17Z)-eicosapentaenoate + reduced [NADPH--hemoprotein reductase] + O2 = (17R,18S)-epoxy-(5Z,8Z,11Z,14Z)-eicosatetraenoate + oxidized [NADPH--hemoprotein reductase] + H2O + H(+). It carries out the reaction (4Z,7Z,10Z,13Z,16Z,19Z)-docosahexaenoate + reduced [NADPH--hemoprotein reductase] + O2 = (19R,20S)-epoxy-(4Z,7Z,10Z,13Z,16Z)-docosapentaenoate + oxidized [NADPH--hemoprotein reductase] + H2O + H(+). The enzyme catalyses (4Z,7Z,10Z,13Z,16Z,19Z)-docosahexaenoate + reduced [NADPH--hemoprotein reductase] + O2 = (19S,20R)-epoxy-(4Z,7Z,10Z,13Z,16Z)-docosapentaenoate + oxidized [NADPH--hemoprotein reductase] + H2O + H(+). The catalysed reaction is (4R)-limonene + reduced [NADPH--hemoprotein reductase] + O2 = (1R,5S)-carveol + oxidized [NADPH--hemoprotein reductase] + H2O + H(+). It catalyses the reaction (4S)-limonene + reduced [NADPH--hemoprotein reductase] + O2 = (1S,5R)-carveol + oxidized [NADPH--hemoprotein reductase] + H2O + H(+). It carries out the reaction (4S)-limonene + reduced [NADPH--hemoprotein reductase] + O2 = (4S)-perillyl alcohol + oxidized [NADPH--hemoprotein reductase] + H2O + H(+). The enzyme catalyses fenbendazole + reduced [NADPH--hemoprotein reductase] + O2 = 4'-hydroxyfenbendazole + oxidized [NADPH--hemoprotein reductase] + H2O + H(+). It participates in lipid metabolism; fatty acid metabolism. It functions in the pathway terpene metabolism; (4R)-limonene degradation. Functionally, a cytochrome P450 monooxygenase involved in the metabolism of polyunsaturated fatty acids (PUFA). Mechanistically, uses molecular oxygen inserting one oxygen atom into a substrate, and reducing the second into a water molecule, with two electrons provided by NADPH via cytochrome P450 reductase (NADPH--hemoprotein reductase). Catalyzes the hydroxylation of carbon-hydrogen bonds. Hydroxylates PUFA specifically at the omega-1 position. Catalyzes the epoxidation of double bonds of PUFA. Also metabolizes plant monoterpenes such as limonene. Oxygenates (R)- and (S)-limonene to produce carveol and perillyl alcohol. Responsible for the metabolism of a number of therapeutic agents such as the anticonvulsant drug S-mephenytoin, omeprazole, proguanil, certain barbiturates, diazepam, propranolol, citalopram and imipramine. Hydroxylates fenbendazole at the 4' position. In Homo sapiens (Human), this protein is Cytochrome P450 2C19 (CYP2C19).